The sequence spans 461 residues: Argininosuccinate lyase (461 aa).

This sequence belongs to the lyase 1 family. Argininosuccinate lyase subfamily.

It localises to the cytoplasm. The enzyme catalyses 2-(N(omega)-L-arginino)succinate = fumarate + L-arginine. It functions in the pathway amino-acid biosynthesis; L-arginine biosynthesis; L-arginine from L-ornithine and carbamoyl phosphate: step 3/3. This Streptococcus gordonii (strain Challis / ATCC 35105 / BCRC 15272 / CH1 / DL1 / V288) protein is Argininosuccinate lyase.